Reading from the N-terminus, the 131-residue chain is Large ribosomal subunit protein uL14m (131 aa).

The protein belongs to the universal ribosomal protein uL14 family. Component of the mitochondrial large ribosomal subunit (mt-LSU). Mature N.crassa 74S mitochondrial ribosomes consist of a small (37S) and a large (54S) subunit. The 37S small subunit contains a 16S ribosomal RNA (16S mt-rRNA) and 32 different proteins. The 54S large subunit contains a 23S rRNA (23S mt-rRNA) and 42 different proteins.

The protein localises to the mitochondrion. In terms of biological role, component of the mitochondrial ribosome (mitoribosome), a dedicated translation machinery responsible for the synthesis of mitochondrial genome-encoded proteins, including at least some of the essential transmembrane subunits of the mitochondrial respiratory chain. The mitoribosomes are attached to the mitochondrial inner membrane and translation products are cotranslationally integrated into the membrane. This chain is Large ribosomal subunit protein uL14m (mrpl38), found in Neurospora crassa (strain ATCC 24698 / 74-OR23-1A / CBS 708.71 / DSM 1257 / FGSC 987).